Reading from the N-terminus, the 367-residue chain is MSKLRVGLLFGGRSGEHEVSISSARAIASALSAGENASKYEILPFYIHKDGRWLAGEAPQQVLKSGAPLLESSNSSPADNNLVNSQQQTLERWQSPSQVAEVDVWFPILHGPNGEDGTIQGLLTLMQTPFVGSGVLGSALGMDKIAMKMAFEQAGLPQVKYKAVTRAQIWSNPCVFPKLCDEIEASLGYPCFVKPANLGSSVGISKVRSRQELEDALDNAANYDRRIIVEAGVVAREVECAVLGNDQPQASTVGEITFNSDFYDYETKYTAGKADLLIPAVIPDEISRQIQDMALQAFAAVDAAGLARVDFFYVEATGEVLINEINTLPGFTATSMYPQLWAYSGIPFPELVDKLVQLAIERHNPSH.

An ATP-grasp domain is found at 148–357 (KMAFEQAGLP…FPELVDKLVQ (210 aa)). 184 to 239 (EASLGYPCFVKPANLGSSVGISKVRSRQELEDALDNAANYDRRIIVEAGVVAREVE) lines the ATP pocket. Mg(2+) contacts are provided by Asp-310, Glu-324, and Asn-326.

This sequence belongs to the D-alanine--D-alanine ligase family. The cofactor is Mg(2+). Mn(2+) is required as a cofactor.

The protein localises to the cytoplasm. The enzyme catalyses 2 D-alanine + ATP = D-alanyl-D-alanine + ADP + phosphate + H(+). It participates in cell wall biogenesis; peptidoglycan biosynthesis. Its function is as follows. Cell wall formation. The polypeptide is D-alanine--D-alanine ligase (Trichormus variabilis (strain ATCC 29413 / PCC 7937) (Anabaena variabilis)).